We begin with the raw amino-acid sequence, 297 residues long: Syntaxin-4 (297 aa).

Residues M1 to D12 are compositionally biased toward basic and acidic residues. The tract at residues M1–E21 is disordered. Residues M1–F275 lie on the Cytoplasmic side of the membrane. 2 positions are modified to phosphoserine: S14 and S15. The residue at position 31 (T31) is a Phosphothreonine. Phosphoserine is present on residues S36, S117, S208, and S248. Residues Q43–T163 are a coiled coil. Residues L200–A262 form the t-SNARE coiled-coil homology domain. Residues I276–L296 traverse the membrane as a helical; Anchor for type IV membrane protein segment. V297 is a topological domain (extracellular).

Belongs to the syntaxin family. In terms of assembly, component of the SNARE complex composed of STX4, SNAP23 and VAMP7 that interacts with SYT7 during lysosomal exocytosis. Found in a complex with VAMP8 and SNAP23. Detected in a complex with SNAP23 and STXBP4. Interacts with VAMP2. Interacts with SNAP23 and SNAPIN. Interacts with LLGL1. Interacts (via C-terminus) with CENPF. Interacts with DOC2B. Interacts with STXBP6. Interacts with STXBP3; excludes interaction with DOC2B and SNAP25. Interacts with STXBP4; excludes interaction with VAMP2. Interacts with STXBP5L.

The protein resides in the cell membrane. It localises to the cell projection. The protein localises to the neuron projection. It is found in the stereocilium. In terms of biological role, plasma membrane t-SNARE that mediates docking of transport vesicles. Necessary for the translocation of SLC2A4 from intracellular vesicles to the plasma membrane. In neurons, recruited at neurite tips to membrane domains rich in the phospholipid 1-oleoyl-2-palmitoyl-PC (OPPC) which promotes neurite tip surface expression of the dopamine transporter SLC6A3/DAT by facilitating fusion of SLC6A3-containing transport vesicles with the plasma membrane. Together with STXB3 and VAMP2, may also play a role in docking/fusion of intracellular GLUT4-containing vesicles with the cell surface in adipocytes and in docking of synaptic vesicles at presynaptic active zones. Required for normal hearing. This Bos taurus (Bovine) protein is Syntaxin-4 (STX4).